We begin with the raw amino-acid sequence, 200 residues long: Protein GrpE (200 aa).

It belongs to the GrpE family. As to quaternary structure, homodimer.

Its subcellular location is the cytoplasm. Its function is as follows. Participates actively in the response to hyperosmotic and heat shock by preventing the aggregation of stress-denatured proteins, in association with DnaK and GrpE. It is the nucleotide exchange factor for DnaK and may function as a thermosensor. Unfolded proteins bind initially to DnaJ; upon interaction with the DnaJ-bound protein, DnaK hydrolyzes its bound ATP, resulting in the formation of a stable complex. GrpE releases ADP from DnaK; ATP binding to DnaK triggers the release of the substrate protein, thus completing the reaction cycle. Several rounds of ATP-dependent interactions between DnaJ, DnaK and GrpE are required for fully efficient folding. The protein is Protein GrpE of Geobacter sulfurreducens (strain ATCC 51573 / DSM 12127 / PCA).